A 411-amino-acid polypeptide reads, in one-letter code: Alpha-1-antiproteinase (411 aa).

The first 24 residues, 1 to 24 (MAPSISRGLLLLAALCCLAPSFLA), serve as a signal peptide directing secretion. Ser33 carries the phosphoserine modification. N-linked (GlcNAc...) asparagine glycosylation is found at Asn64, Asn101, and Asn265. The tract at residues 367–386 (GATVVEAVPMSLPPQVKFDH) is RCL. Ser377 carries the phosphoserine modification.

This sequence belongs to the serpin family. In terms of assembly, interacts with CELA2A. Interacts with ERGIC3 and LMAN1/ERGIC53. Interacts with PRSS1/Trypsin. Plasma.

The protein resides in the secreted. In terms of biological role, inhibitor of serine proteases. The primary target is elastase, but also has a moderate affinity for plasmin and thrombin. The polypeptide is Alpha-1-antiproteinase (Serpina1) (Rattus norvegicus (Rat)).